Reading from the N-terminus, the 219-residue chain is Ribose-5-phosphate isomerase A (219 aa).

Residues 28-31, 81-84, and 94-97 each bind substrate; these read TGST, DGAD, and KGGG. The active-site Proton acceptor is the Glu-103. Lys-121 provides a ligand contact to substrate.

This sequence belongs to the ribose 5-phosphate isomerase family. Homodimer.

The catalysed reaction is aldehydo-D-ribose 5-phosphate = D-ribulose 5-phosphate. Its pathway is carbohydrate degradation; pentose phosphate pathway; D-ribose 5-phosphate from D-ribulose 5-phosphate (non-oxidative stage): step 1/1. Functionally, catalyzes the reversible conversion of ribose-5-phosphate to ribulose 5-phosphate. In Shewanella sp. (strain MR-4), this protein is Ribose-5-phosphate isomerase A.